We begin with the raw amino-acid sequence, 336 residues long: Mitochondrial thiamine diphosphate carrier 2 (336 aa).

Transmembrane regions (helical) follow at residues 11–27 (RRAL…GGIS), 88–105 (VPAL…FTVL), 127–150 (YLSY…FDLL), 182–199 (LYSG…YAGL), 230–246 (SVSS…AGTF), and 303–322 (GLFP…FVAY). 3 Solcar repeats span residues 11–111 (RRAL…LKTF), 124–210 (LSPY…FKRS), and 231–328 (VSSF…ISDW).

It belongs to the mitochondrial carrier (TC 2.A.29) family. In terms of tissue distribution, ubiquitous.

It localises to the mitochondrion inner membrane. Functionally, mitochondrial transporter that mediates uptake of thiamine diphosphate (ThDP) into mitochondria. This is Mitochondrial thiamine diphosphate carrier 2 from Zea mays (Maize).